Here is a 717-residue protein sequence, read N- to C-terminus: Polyribonucleotide nucleotidyltransferase (717 aa).

Residues Asp-486 and Asp-492 each coordinate Mg(2+). Residues 553–612 (PKIVQLQIDIDKISLVIGSTGKTVKAITDEFEVRVQIEQDGRITLFGTDNLKMQKAKAKI) form the KH domain. One can recognise an S1 motif domain in the interval 622-715 (GEIYDGIVKK…KFGKIELELA (94 aa)). Positions 650–681 (SNRSRSRDDRYGSDIRHSRYSNRNSRYGRDNR) are disordered. Over residues 654–666 (RSRDDRYGSDIRH) the composition is skewed to basic and acidic residues.

The protein belongs to the polyribonucleotide nucleotidyltransferase family. Requires Mg(2+) as cofactor.

The protein resides in the cytoplasm. The enzyme catalyses RNA(n+1) + phosphate = RNA(n) + a ribonucleoside 5'-diphosphate. Involved in mRNA degradation. Catalyzes the phosphorolysis of single-stranded polyribonucleotides processively in the 3'- to 5'-direction. This chain is Polyribonucleotide nucleotidyltransferase, found in Borrelia duttonii (strain Ly).